The following is a 78-amino-acid chain: Molt-inhibiting hormone (78 aa).

3 cysteine pairs are disulfide-bonded: Cys7–Cys44, Cys24–Cys40, and Cys27–Cys53.

It localises to the secreted. Inhibits Y-organs where molting hormone (ecdysteroid) is secreted. A molting cycle is initiated when MIH secretion diminishes or stops. Also has significant hyperglycemic hormone (CHH) activity. This is Molt-inhibiting hormone from Cancer pagurus (Rock crab).